Consider the following 328-residue polypeptide: D-cysteine desulfhydrase (328 aa).

Residue K51 is modified to N6-(pyridoxal phosphate)lysine.

It belongs to the ACC deaminase/D-cysteine desulfhydrase family. In terms of assembly, homodimer. Pyridoxal 5'-phosphate serves as cofactor.

It carries out the reaction D-cysteine + H2O = hydrogen sulfide + pyruvate + NH4(+) + H(+). Catalyzes the alpha,beta-elimination reaction of D-cysteine and of several D-cysteine derivatives. It could be a defense mechanism against D-cysteine. The protein is D-cysteine desulfhydrase of Escherichia coli O6:H1 (strain CFT073 / ATCC 700928 / UPEC).